The following is a 272-amino-acid chain: Elongation factor Ts (272 aa).

The tract at residues 86-89 (TDFV) is involved in Mg(2+) ion dislocation from EF-Tu.

Belongs to the EF-Ts family.

Its subcellular location is the cytoplasm. Functionally, associates with the EF-Tu.GDP complex and induces the exchange of GDP to GTP. It remains bound to the aminoacyl-tRNA.EF-Tu.GTP complex up to the GTP hydrolysis stage on the ribosome. The protein is Elongation factor Ts of Blochmanniella pennsylvanica (strain BPEN).